Here is an 829-residue protein sequence, read N- to C-terminus: Leucine--tRNA ligase (829 aa).

The short motif at 40–50 (PYPSGNIHMGH) is the 'HIGH' region element. Positions 581–585 (KMSKS) match the 'KMSKS' region motif. Lys584 serves as a coordination point for ATP.

It belongs to the class-I aminoacyl-tRNA synthetase family.

It localises to the cytoplasm. It carries out the reaction tRNA(Leu) + L-leucine + ATP = L-leucyl-tRNA(Leu) + AMP + diphosphate. In Nitratidesulfovibrio vulgaris (strain ATCC 29579 / DSM 644 / CCUG 34227 / NCIMB 8303 / VKM B-1760 / Hildenborough) (Desulfovibrio vulgaris), this protein is Leucine--tRNA ligase.